Here is a 258-residue protein sequence, read N- to C-terminus: Small ribosomal subunit protein mS40 (258 aa).

The N-terminal 35 residues, 1 to 35 (MAASVLNTLLRRLPMLSLFRGAHRVQVPLQTLCTK), are a transit peptide targeting the mitochondrion. Phosphoserine is present on residues serine 38 and serine 49. The segment at 218 to 258 (RLYQGHLREESGPPPESMPKMPPTAPAEASFTGQTDPQSAL) is disordered. Positions 229–242 (GPPPESMPKMPPTA) are enriched in pro residues. The segment covering 248 to 258 (FTGQTDPQSAL) has biased composition (polar residues).

Belongs to the bacterial ribosomal protein bS18 family. Mitochondrion-specific ribosomal protein mS40 subfamily. As to quaternary structure, component of the mitochondrial ribosome small subunit (28S) which comprises a 12S rRNA and about 30 distinct proteins.

It localises to the mitochondrion. The protein is Small ribosomal subunit protein mS40 (MRPS18B) of Macaca mulatta (Rhesus macaque).